Reading from the N-terminus, the 933-residue chain is Isoleucine--tRNA ligase (933 aa).

The 'HIGH' region signature appears at 57–67; sequence PYANGNIHVGH. E554 serves as a coordination point for L-isoleucyl-5'-AMP. Positions 595–599 match the 'KMSKS' region motif; that stretch reads KMSKS. K598 is a binding site for ATP.

This sequence belongs to the class-I aminoacyl-tRNA synthetase family. IleS type 1 subfamily. As to quaternary structure, monomer.

It is found in the cytoplasm. The enzyme catalyses tRNA(Ile) + L-isoleucine + ATP = L-isoleucyl-tRNA(Ile) + AMP + diphosphate. In terms of biological role, catalyzes the attachment of isoleucine to tRNA(Ile). As IleRS can inadvertently accommodate and process structurally similar amino acids such as valine, to avoid such errors it has two additional distinct tRNA(Ile)-dependent editing activities. One activity is designated as 'pretransfer' editing and involves the hydrolysis of activated Val-AMP. The other activity is designated 'posttransfer' editing and involves deacylation of mischarged Val-tRNA(Ile). The protein is Isoleucine--tRNA ligase of Streptococcus pyogenes serotype M3 (strain ATCC BAA-595 / MGAS315).